The chain runs to 308 residues: Phenylcoumaran benzylic ether reductase TP7 (308 aa).

Residues 11–17, R36, and K45 contribute to the NADP(+) site; that span reads GGTGYIG. The Proton acceptor role is filled by K133. An NADP(+)-binding site is contributed by R137.

Belongs to the NmrA-type oxidoreductase family. Isoflavone reductase subfamily. As to expression, expressed in flowers. Expressed at low levels in stems.

It catalyses the reaction (-)-dehydrodiconiferyl alcohol + NADPH + H(+) = (S)-isodihydrodehydrodiconiferyl alcohol + NADP(+). It carries out the reaction (+)-dehydrodiconiferyl alcohol + NADPH + H(+) = (R)-isodihydrodehydrodiconiferyl alcohol + NADP(+). The enzyme catalyses (2R,3S)-dihydrodehydrodiconiferyl alcohol + NADPH + H(+) = (S)-tetrahydrodehydrodiconiferyl alcohol + NADP(+). The catalysed reaction is (2S,3R)-dihydrodehydrodiconiferyl alcohol + NADPH + H(+) = (R)-tetrahydrodehydrodiconiferyl alcohol + NADP(+). In terms of biological role, oxidoreductase involved in lignan biosynthesis. Catalyzes the NADPH-dependent reduction of phenylcoumaran benzylic ethers. Converts dehydrodiconiferyl alcohol (DDC) to isodihydrodehydrodiconiferyl alcohol (IDDDC), and dihydrodehydrodiconiferyl alcohol (DDDC) to tetrahydrodehydrodiconiferyl alcohol (TDDC). The protein is Phenylcoumaran benzylic ether reductase TP7 of Nicotiana tabacum (Common tobacco).